Here is a 76-residue protein sequence, read N- to C-terminus: Conotoxin Im6.9 (76 aa).

Residues 1–19 (MEKLTILLLVTAVLMSTQA) form the signal peptide. A propeptide spanning residues 20–45 (LMQSGIEKRQRAKIKFFSKRKTTAER) is cleaved from the precursor. Disulfide bonds link Cys51–Cys65, Cys58–Cys69, and Cys64–Cys73.

This sequence belongs to the conotoxin O2 superfamily. Expressed by the venom duct.

It localises to the secreted. Functionally, probable neurotoxin. In Conus imperialis (Imperial cone), this protein is Conotoxin Im6.9.